A 138-amino-acid chain; its full sequence is Large ribosomal subunit protein uL16 (138 aa).

Residues 1–13 (MLQPSRRKFRKEQ) are compositionally biased toward basic residues. The segment at 1–22 (MLQPSRRKFRKEQKGRNTGIAT) is disordered.

Belongs to the universal ribosomal protein uL16 family. In terms of assembly, part of the 50S ribosomal subunit.

In terms of biological role, binds 23S rRNA and is also seen to make contacts with the A and possibly P site tRNAs. This is Large ribosomal subunit protein uL16 from Methylibium petroleiphilum (strain ATCC BAA-1232 / LMG 22953 / PM1).